The sequence spans 492 residues: Sestrin-3 (492 aa).

The tract at residues L62 to I243 is N-terminal domain; may mediate the alkylhydroperoxide reductase activity. The Cysteine sulfenic acid (-SOH) intermediate role is filled by C121. Positions P310–T492 are C-terminal domain; mediates TORC1 regulation. L-leucine is bound by residues T386 to T389, T398, and E463.

This sequence belongs to the sestrin family. Interacts with the GATOR2 complex which is composed of MIOS, SEC13, SEH1L, WDR24 and WDR59; the interaction is not regulated by leucine. Interacts with RRAGA, RRAGB, RRAGC and RRAGD; may function as a guanine nucleotide dissociation inhibitor for RRAGs and regulate them. Interacts with the TORC2 complex; through RICTOR. In terms of tissue distribution, detected in liver and skeletal muscles.

Its subcellular location is the cytoplasm. The enzyme catalyses a hydroperoxide + L-cysteinyl-[protein] = S-hydroxy-L-cysteinyl-[protein] + an alcohol. In terms of biological role, may function as an intracellular leucine sensor that negatively regulates the TORC1 signaling pathway. May also regulate the insulin-receptor signaling pathway through activation of TORC2. This metabolic regulator may also play a role in protection against oxidative and genotoxic stresses. May prevent the accumulation of reactive oxygen species (ROS) through the alkylhydroperoxide reductase activity born by the N-terminal domain of the protein. The protein is Sestrin-3 of Mus musculus (Mouse).